Consider the following 210-residue polypeptide: Thiamine-phosphate synthase 2 (210 aa).

4-amino-2-methyl-5-(diphosphooxymethyl)pyrimidine is bound by residues 38-42 (QLREK) and aspartate 70. Positions 71 and 90 each coordinate Mg(2+). Threonine 109 serves as a coordination point for 4-amino-2-methyl-5-(diphosphooxymethyl)pyrimidine. 135-137 (TTT) provides a ligand contact to 2-[(2R,5Z)-2-carboxy-4-methylthiazol-5(2H)-ylidene]ethyl phosphate. Lysine 138 lines the 4-amino-2-methyl-5-(diphosphooxymethyl)pyrimidine pocket. A 2-[(2R,5Z)-2-carboxy-4-methylthiazol-5(2H)-ylidene]ethyl phosphate-binding site is contributed by glycine 165.

It belongs to the thiamine-phosphate synthase family. The cofactor is Mg(2+).

It carries out the reaction 2-[(2R,5Z)-2-carboxy-4-methylthiazol-5(2H)-ylidene]ethyl phosphate + 4-amino-2-methyl-5-(diphosphooxymethyl)pyrimidine + 2 H(+) = thiamine phosphate + CO2 + diphosphate. The enzyme catalyses 2-(2-carboxy-4-methylthiazol-5-yl)ethyl phosphate + 4-amino-2-methyl-5-(diphosphooxymethyl)pyrimidine + 2 H(+) = thiamine phosphate + CO2 + diphosphate. It catalyses the reaction 4-methyl-5-(2-phosphooxyethyl)-thiazole + 4-amino-2-methyl-5-(diphosphooxymethyl)pyrimidine + H(+) = thiamine phosphate + diphosphate. It functions in the pathway cofactor biosynthesis; thiamine diphosphate biosynthesis; thiamine phosphate from 4-amino-2-methyl-5-diphosphomethylpyrimidine and 4-methyl-5-(2-phosphoethyl)-thiazole: step 1/1. Functionally, condenses 4-methyl-5-(beta-hydroxyethyl)thiazole monophosphate (THZ-P) and 2-methyl-4-amino-5-hydroxymethyl pyrimidine pyrophosphate (HMP-PP) to form thiamine monophosphate (TMP). The protein is Thiamine-phosphate synthase 2 of Streptococcus pneumoniae serotype 4 (strain ATCC BAA-334 / TIGR4).